Consider the following 63-residue polypeptide: Arabinogalactan peptide 3 (63 aa).

A signal peptide spans 1–26 (MASRILYAAAVVAAVAVSSLAGVAYA). Ser36 carries GPI-anchor amidated serine lipidation. A propeptide spans 37–63 (GAAAVSSSLVAAVLCPAVALLLGNLRQ) (removed in mature form).

This sequence belongs to the AG-peptide AGP family. O-glycosylated on hydroxyprolines; noncontiguous hydroxylproline residues are glycosylated with arabinogalactan. As to expression, expressed in roots, stems, leaves, flowers and seeds.

The protein localises to the vacuole. Its subcellular location is the aleurone grain membrane. Its function is as follows. Proteoglycan that seems to be implicated in diverse developmental roles such as differentiation, cell-cell recognition, embryogenesis and programmed cell death. The polypeptide is Arabinogalactan peptide 3 (AGPEP3) (Oryza sativa subsp. japonica (Rice)).